The following is a 60-amino-acid chain: Large ribosomal subunit protein uL30 (60 aa).

It belongs to the universal ribosomal protein uL30 family. In terms of assembly, part of the 50S ribosomal subunit.

The sequence is that of Large ribosomal subunit protein uL30 from Ligilactobacillus salivarius (strain UCC118) (Lactobacillus salivarius).